Here is a 223-residue protein sequence, read N- to C-terminus: uncharacterized protein (223 aa).

This is an uncharacterized protein from Aquifex aeolicus (strain VF5).